The sequence spans 262 residues: Acyl-[acyl-carrier-protein]--UDP-N-acetylglucosamine O-acyltransferase (262 aa).

The protein belongs to the transferase hexapeptide repeat family. LpxA subfamily. As to quaternary structure, homotrimer.

It localises to the cytoplasm. The catalysed reaction is a (3R)-hydroxyacyl-[ACP] + UDP-N-acetyl-alpha-D-glucosamine = a UDP-3-O-[(3R)-3-hydroxyacyl]-N-acetyl-alpha-D-glucosamine + holo-[ACP]. It participates in glycolipid biosynthesis; lipid IV(A) biosynthesis; lipid IV(A) from (3R)-3-hydroxytetradecanoyl-[acyl-carrier-protein] and UDP-N-acetyl-alpha-D-glucosamine: step 1/6. Functionally, involved in the biosynthesis of lipid A, a phosphorylated glycolipid that anchors the lipopolysaccharide to the outer membrane of the cell. The chain is Acyl-[acyl-carrier-protein]--UDP-N-acetylglucosamine O-acyltransferase from Burkholderia multivorans (strain ATCC 17616 / 249).